The chain runs to 287 residues: Elongation factor Ts (287 aa).

The segment at 80-83 (TDFL) is involved in Mg(2+) ion dislocation from EF-Tu.

It belongs to the EF-Ts family.

Its subcellular location is the cytoplasm. Its function is as follows. Associates with the EF-Tu.GDP complex and induces the exchange of GDP to GTP. It remains bound to the aminoacyl-tRNA.EF-Tu.GTP complex up to the GTP hydrolysis stage on the ribosome. This chain is Elongation factor Ts, found in Pseudomonas putida (strain W619).